A 388-amino-acid chain; its full sequence is Succinate--CoA ligase [ADP-forming] subunit beta (388 aa).

Residues 9 to 244 enclose the ATP-grasp domain; it reads KQLFAEYGLP…PSQEDEREAH (236 aa). Residues Lys46, 53–55, Glu99, Ser102, and Glu107 each bind ATP; that span reads GRG. Positions 199 and 213 each coordinate Mg(2+). Substrate is bound by residues Asn264 and 321-323; that span reads GIV.

This sequence belongs to the succinate/malate CoA ligase beta subunit family. In terms of assembly, heterotetramer of two alpha and two beta subunits. Requires Mg(2+) as cofactor.

The catalysed reaction is succinate + ATP + CoA = succinyl-CoA + ADP + phosphate. The enzyme catalyses GTP + succinate + CoA = succinyl-CoA + GDP + phosphate. It functions in the pathway carbohydrate metabolism; tricarboxylic acid cycle; succinate from succinyl-CoA (ligase route): step 1/1. Functionally, succinyl-CoA synthetase functions in the citric acid cycle (TCA), coupling the hydrolysis of succinyl-CoA to the synthesis of either ATP or GTP and thus represents the only step of substrate-level phosphorylation in the TCA. The beta subunit provides nucleotide specificity of the enzyme and binds the substrate succinate, while the binding sites for coenzyme A and phosphate are found in the alpha subunit. In Aliivibrio salmonicida (strain LFI1238) (Vibrio salmonicida (strain LFI1238)), this protein is Succinate--CoA ligase [ADP-forming] subunit beta.